The chain runs to 251 residues: ATP synthase subunit a (251 aa).

Helical transmembrane passes span 34 to 54, 93 to 113, 130 to 150, 195 to 215, and 216 to 236; these read VFLT…AASS, FVGT…LVPF, INTT…AGFS, LVVG…VMAL, and GLFT…AYIG.

The protein belongs to the ATPase A chain family. As to quaternary structure, F-type ATPases have 2 components, CF(1) - the catalytic core - and CF(0) - the membrane proton channel. CF(1) has five subunits: alpha(3), beta(3), gamma(1), delta(1), epsilon(1). CF(0) has four main subunits: a, b, b' and c.

The protein localises to the cellular thylakoid membrane. In terms of biological role, key component of the proton channel; it plays a direct role in the translocation of protons across the membrane. The polypeptide is ATP synthase subunit a (Trichormus variabilis (strain ATCC 29413 / PCC 7937) (Anabaena variabilis)).